The chain runs to 159 residues: 6,7-dimethyl-8-ribityllumazine synthase (159 aa).

Residues tryptophan 26, alanine 58–glutamate 60, and valine 80–isoleucine 82 each bind 5-amino-6-(D-ribitylamino)uracil. A (2S)-2-hydroxy-3-oxobutyl phosphate-binding site is contributed by glutamate 85 to threonine 86. Catalysis depends on histidine 88, which acts as the Proton donor. Position 113 (asparagine 113) interacts with 5-amino-6-(D-ribitylamino)uracil. Residue arginine 127 participates in (2S)-2-hydroxy-3-oxobutyl phosphate binding.

The protein belongs to the DMRL synthase family. As to quaternary structure, homopentamer.

The enzyme catalyses (2S)-2-hydroxy-3-oxobutyl phosphate + 5-amino-6-(D-ribitylamino)uracil = 6,7-dimethyl-8-(1-D-ribityl)lumazine + phosphate + 2 H2O + H(+). It functions in the pathway cofactor biosynthesis; riboflavin biosynthesis; riboflavin from 2-hydroxy-3-oxobutyl phosphate and 5-amino-6-(D-ribitylamino)uracil: step 1/2. In terms of biological role, catalyzes the formation of 6,7-dimethyl-8-ribityllumazine by condensation of 5-amino-6-(D-ribitylamino)uracil with 3,4-dihydroxy-2-butanone 4-phosphate. This is the penultimate step in the biosynthesis of riboflavin. The protein is 6,7-dimethyl-8-ribityllumazine synthase of Mycolicibacterium gilvum (strain PYR-GCK) (Mycobacterium gilvum (strain PYR-GCK)).